Here is a 188-residue protein sequence, read N- to C-terminus: ATP synthase subunit delta (188 aa).

The protein belongs to the ATPase delta chain family. In terms of assembly, F-type ATPases have 2 components, F(1) - the catalytic core - and F(0) - the membrane proton channel. F(1) has five subunits: alpha(3), beta(3), gamma(1), delta(1), epsilon(1). F(0) has three main subunits: a(1), b(2) and c(10-14). The alpha and beta chains form an alternating ring which encloses part of the gamma chain. F(1) is attached to F(0) by a central stalk formed by the gamma and epsilon chains, while a peripheral stalk is formed by the delta and b chains.

The protein resides in the cell inner membrane. F(1)F(0) ATP synthase produces ATP from ADP in the presence of a proton or sodium gradient. F-type ATPases consist of two structural domains, F(1) containing the extramembraneous catalytic core and F(0) containing the membrane proton channel, linked together by a central stalk and a peripheral stalk. During catalysis, ATP synthesis in the catalytic domain of F(1) is coupled via a rotary mechanism of the central stalk subunits to proton translocation. Functionally, this protein is part of the stalk that links CF(0) to CF(1). It either transmits conformational changes from CF(0) to CF(1) or is implicated in proton conduction. This is ATP synthase subunit delta from Rhizobium meliloti (strain 1021) (Ensifer meliloti).